The primary structure comprises 159 residues: MSNVFTHINADGNAHMVDVTEKAVTEREARAEAFIEMASTTLEMIMSGSHHKGDVFATARIAGIQAAKKTSDLIPLCHPLMLTKVEVELEAQPEHNRVRITSLCKLSGKTGVEMEALTAASVAALTIYDMCKAVQKDMVISQVRLLEKRGGKSGHFKAE.

Residues 76 to 78 (LCH) and 114 to 115 (ME) contribute to the substrate site. Residue Asp129 is part of the active site.

This sequence belongs to the MoaC family. Homohexamer; trimer of dimers.

It carries out the reaction (8S)-3',8-cyclo-7,8-dihydroguanosine 5'-triphosphate = cyclic pyranopterin phosphate + diphosphate. The protein operates within cofactor biosynthesis; molybdopterin biosynthesis. Catalyzes the conversion of (8S)-3',8-cyclo-7,8-dihydroguanosine 5'-triphosphate to cyclic pyranopterin monophosphate (cPMP). This is Cyclic pyranopterin monophosphate synthase from Shewanella oneidensis (strain ATCC 700550 / JCM 31522 / CIP 106686 / LMG 19005 / NCIMB 14063 / MR-1).